We begin with the raw amino-acid sequence, 163 residues long: Cytochrome b6-f complex subunit 4 (163 aa).

The next 3 helical transmembrane spans lie at 36-56, 95-115, and 131-151; these read LLYI…GLAV, LLGV…PFLE, and TVFL…TLPI.

It belongs to the cytochrome b family. PetD subfamily. The 4 large subunits of the cytochrome b6-f complex are cytochrome b6, subunit IV (17 kDa polypeptide, petD), cytochrome f and the Rieske protein, while the 4 small subunits are petG, petL, petM and petN. The complex functions as a dimer.

It localises to the plastid. It is found in the chloroplast thylakoid membrane. Component of the cytochrome b6-f complex, which mediates electron transfer between photosystem II (PSII) and photosystem I (PSI), cyclic electron flow around PSI, and state transitions. The polypeptide is Cytochrome b6-f complex subunit 4 (Drimys granadensis).